We begin with the raw amino-acid sequence, 275 residues long: Nitrogenase iron protein 2 (275 aa).

9–16 (GKGGIGKS) is a binding site for ATP. C97 is a binding site for [4Fe-4S] cluster. R100 carries the ADP-ribosylarginine; by dinitrogenase reductase ADP-ribosyltransferase modification. C132 is a [4Fe-4S] cluster binding site.

This sequence belongs to the NifH/BchL/ChlL family. As to quaternary structure, homodimer. The cofactor is [4Fe-4S] cluster. In terms of processing, the reversible ADP-ribosylation of Arg-100 inactivates the nitrogenase reductase and regulates nitrogenase activity.

It catalyses the reaction N2 + 8 reduced [2Fe-2S]-[ferredoxin] + 16 ATP + 16 H2O = H2 + 8 oxidized [2Fe-2S]-[ferredoxin] + 2 NH4(+) + 16 ADP + 16 phosphate + 6 H(+). Its function is as follows. The key enzymatic reactions in nitrogen fixation are catalyzed by the nitrogenase complex, which has 2 components: the iron protein (component 2) and a component 1 which is either a molybdenum-iron protein, a vanadium-iron, or an iron-iron protein. This Rhodobacter capsulatus (Rhodopseudomonas capsulata) protein is Nitrogenase iron protein 2 (anfH).